A 103-amino-acid polypeptide reads, in one-letter code: Large ribosomal subunit protein bL21 (103 aa).

This sequence belongs to the bacterial ribosomal protein bL21 family. In terms of assembly, part of the 50S ribosomal subunit. Contacts protein L20.

In terms of biological role, this protein binds to 23S rRNA in the presence of protein L20. This is Large ribosomal subunit protein bL21 from Klebsiella pneumoniae (strain 342).